The primary structure comprises 313 residues: D-alanine--D-alanine ligase (313 aa).

The region spanning Lys108 to Ser308 is the ATP-grasp domain. ATP is bound at residue Val138–Tyr193. Asp262, Glu275, and Asn277 together coordinate Mg(2+).

The protein belongs to the D-alanine--D-alanine ligase family. The cofactor is Mg(2+). Requires Mn(2+) as cofactor.

It is found in the cytoplasm. It catalyses the reaction 2 D-alanine + ATP = D-alanyl-D-alanine + ADP + phosphate + H(+). Its pathway is cell wall biogenesis; peptidoglycan biosynthesis. Cell wall formation. The chain is D-alanine--D-alanine ligase from Burkholderia cenocepacia (strain HI2424).